We begin with the raw amino-acid sequence, 135 residues long: Protein NrdI (135 aa).

It belongs to the NrdI family.

Probably involved in ribonucleotide reductase function. This Pectobacterium carotovorum subsp. carotovorum (strain PC1) protein is Protein NrdI.